The primary structure comprises 78 residues: Large ribosomal subunit protein bL28 (78 aa).

The disordered stretch occupies residues 1 to 26 (MSAYCQVTGRKPSFGKSVSHSHRRTN).

The protein belongs to the bacterial ribosomal protein bL28 family.

This Corynebacterium jeikeium (strain K411) protein is Large ribosomal subunit protein bL28.